Here is a 545-residue protein sequence, read N- to C-terminus: ATP synthase subunit alpha (545 aa).

An ATP-binding site is contributed by Gly172–Thr179. The interval Phe511–Gln545 is disordered. Basic and acidic residues predominate over residues Pro523 to Thr534. Residues Lys535–Gln545 are compositionally biased toward polar residues.

Belongs to the ATPase alpha/beta chains family. As to quaternary structure, F-type ATPases have 2 components, CF(1) - the catalytic core - and CF(0) - the membrane proton channel. CF(1) has five subunits: alpha(3), beta(3), gamma(1), delta(1), epsilon(1). CF(0) has three main subunits: a(1), b(2) and c(9-12). The alpha and beta chains form an alternating ring which encloses part of the gamma chain. CF(1) is attached to CF(0) by a central stalk formed by the gamma and epsilon chains, while a peripheral stalk is formed by the delta and b chains.

The protein resides in the cell membrane. The enzyme catalyses ATP + H2O + 4 H(+)(in) = ADP + phosphate + 5 H(+)(out). Functionally, produces ATP from ADP in the presence of a proton gradient across the membrane. The alpha chain is a regulatory subunit. The chain is ATP synthase subunit alpha from Corynebacterium jeikeium (strain K411).